The chain runs to 209 residues: Ribosome maturation factor RimP (209 aa).

It belongs to the RimP family.

The protein localises to the cytoplasm. Functionally, required for maturation of 30S ribosomal subunits. The protein is Ribosome maturation factor RimP of Bartonella bacilliformis (strain ATCC 35685 / KC583 / Herrer 020/F12,63).